The chain runs to 246 residues: Ribonuclease 3 (246 aa).

Residues 8–137 (ANRLKTRLGF…LLGAIYLDQG (130 aa)) form the RNase III domain. A Mg(2+)-binding site is contributed by Glu-50. Asp-54 is a catalytic residue. Residues Asp-123 and Glu-126 each coordinate Mg(2+). Residue Glu-126 is part of the active site. The 70-residue stretch at 164-233 (DYKTELQEIL…AKDAFQHLEG (70 aa)) folds into the DRBM domain. The segment at 212 to 246 (SGHSKKEAEQQAAKDAFQHLEGMGKSGHKSAGPIR) is disordered.

Belongs to the ribonuclease III family. As to quaternary structure, homodimer. Mg(2+) serves as cofactor.

It localises to the cytoplasm. It carries out the reaction Endonucleolytic cleavage to 5'-phosphomonoester.. Digests double-stranded RNA. Involved in the processing of primary rRNA transcript to yield the immediate precursors to the large and small rRNAs (23S and 16S). Processes some mRNAs, and tRNAs when they are encoded in the rRNA operon. Processes pre-crRNA and tracrRNA of type II CRISPR loci if present in the organism. The sequence is that of Ribonuclease 3 from Desulforamulus reducens (strain ATCC BAA-1160 / DSM 100696 / MI-1) (Desulfotomaculum reducens).